The following is a 164-amino-acid chain: Large ribosomal subunit protein bL9 (164 aa).

This sequence belongs to the bacterial ribosomal protein bL9 family.

In terms of biological role, binds to the 23S rRNA. The chain is Large ribosomal subunit protein bL9 from Psychrobacter sp. (strain PRwf-1).